The following is a 184-amino-acid chain: Myosin regulatory light chain 1 (184 aa).

The disordered stretch occupies residues 1 to 29 (MFSSKENSLGAKRAPFSSNTTSSQRVAAQ). Position 36 is a phosphoserine (Ser36). 2 consecutive EF-hand domains span residues 45–80 (SQIQ…LNQD) and 114–149 (SPRN…MGDR). Asp58, Asp60, Asp62, Asn64, and Asp69 together coordinate Ca(2+).

In terms of assembly, binds to myosin II chains myo2 and myo3.

Its subcellular location is the cytoplasm. This chain is Myosin regulatory light chain 1 (rlc1), found in Schizosaccharomyces pombe (strain 972 / ATCC 24843) (Fission yeast).